A 98-amino-acid polypeptide reads, in one-letter code: Large ribosomal subunit protein bL28 (98 aa).

This sequence belongs to the bacterial ribosomal protein bL28 family.

The polypeptide is Large ribosomal subunit protein bL28 (Beijerinckia indica subsp. indica (strain ATCC 9039 / DSM 1715 / NCIMB 8712)).